Consider the following 119-residue polypeptide: Large ribosomal subunit protein uL22 (119 aa).

This sequence belongs to the universal ribosomal protein uL22 family. As to quaternary structure, part of the 50S ribosomal subunit.

In terms of biological role, this protein binds specifically to 23S rRNA; its binding is stimulated by other ribosomal proteins, e.g. L4, L17, and L20. It is important during the early stages of 50S assembly. It makes multiple contacts with different domains of the 23S rRNA in the assembled 50S subunit and ribosome. The globular domain of the protein is located near the polypeptide exit tunnel on the outside of the subunit, while an extended beta-hairpin is found that lines the wall of the exit tunnel in the center of the 70S ribosome. The polypeptide is Large ribosomal subunit protein uL22 (Rickettsia typhi (strain ATCC VR-144 / Wilmington)).